A 275-amino-acid polypeptide reads, in one-letter code: HUWE1-associated protein modifying stress responses (275 aa).

Residues 32–44 are compositionally biased toward acidic residues; the sequence is AEQDEQLSPELQE. 4 disordered regions span residues 32–51, 155–181, 204–228, and 250–275; these read AEQD…AAAQ, RNSR…SSVE, SVRS…RRNG, and GTRK…NRML. Residue Ser167 is modified to Phosphoserine. A compositionally biased stretch (low complexity) spans 172–181; sequence TSTETSSSVE. Polar residues predominate over residues 204–221; it reads SVRSSTPGSPTHVSSGPN. Ser212 bears the Phosphoserine mark.

This sequence belongs to the HAPSTR1 family. As to quaternary structure, homooligomer. Heterooligomer with HAPSTR2; the interaction is direct and stabilizes HAPSTR1. Interacts with HUWE1. Post-translationally, ubiquitinated by HUWE1. Promotes HAPSTR1 degradation through polyubiquitination.

It is found in the nucleus. The protein localises to the cytoplasm. Its function is as follows. Acts as a central player within a network of stress response pathways promoting cellular adaptability. The E3 ligase HUWE1 assists HAPSTR1 in controlling stress signaling and in turn, HUWE1 feeds back to promote the degradation of HAPSTR1. HAPSTR1 represents a central coordination mechanism for stress response programs. Functions as a negative regulator of TP53/P53 in the cellular response to telomere erosion and probably also DNA damage. May attenuate p53/TP53 activation through the E3 ubiquitin ligase HUWE1. The sequence is that of HUWE1-associated protein modifying stress responses from Mus musculus (Mouse).